A 181-amino-acid polypeptide reads, in one-letter code: MRPFHGTTVLCVRRDGKVVMASDGQVTLDKTVMKSTARKVRRLAEGAVLAGFAGATADAFQLFELFEKKLKEHARSLPRAAVELAKQWRTDRMLRRLEAMLVVADREHILVLSGAGDVIEPDPVPGGGVVAIGSGAPYAVAAARALLGHSALPARQVAEEAMKLAAEICIYTNANLTFEEL.

The active site involves Thr-7. Na(+) contacts are provided by Ala-166, Cys-169, and Thr-172.

It belongs to the peptidase T1B family. HslV subfamily. As to quaternary structure, a double ring-shaped homohexamer of HslV is capped on each side by a ring-shaped HslU homohexamer. The assembly of the HslU/HslV complex is dependent on binding of ATP.

It localises to the cytoplasm. It catalyses the reaction ATP-dependent cleavage of peptide bonds with broad specificity.. Allosterically activated by HslU binding. Functionally, protease subunit of a proteasome-like degradation complex believed to be a general protein degrading machinery. This chain is ATP-dependent protease subunit HslV, found in Anaeromyxobacter sp. (strain Fw109-5).